The primary structure comprises 189 residues: Crossover junction endodeoxyribonuclease RuvC (189 aa).

Catalysis depends on residues aspartate 7, glutamate 68, and aspartate 141. Mg(2+) is bound by residues aspartate 7, glutamate 68, and aspartate 141.

It belongs to the RuvC family. In terms of assembly, homodimer which binds Holliday junction (HJ) DNA. The HJ becomes 2-fold symmetrical on binding to RuvC with unstacked arms; it has a different conformation from HJ DNA in complex with RuvA. In the full resolvosome a probable DNA-RuvA(4)-RuvB(12)-RuvC(2) complex forms which resolves the HJ. Mg(2+) serves as cofactor.

It is found in the cytoplasm. The catalysed reaction is Endonucleolytic cleavage at a junction such as a reciprocal single-stranded crossover between two homologous DNA duplexes (Holliday junction).. Functionally, the RuvA-RuvB-RuvC complex processes Holliday junction (HJ) DNA during genetic recombination and DNA repair. Endonuclease that resolves HJ intermediates. Cleaves cruciform DNA by making single-stranded nicks across the HJ at symmetrical positions within the homologous arms, yielding a 5'-phosphate and a 3'-hydroxyl group; requires a central core of homology in the junction. The consensus cleavage sequence is 5'-(A/T)TT(C/G)-3'. Cleavage occurs on the 3'-side of the TT dinucleotide at the point of strand exchange. HJ branch migration catalyzed by RuvA-RuvB allows RuvC to scan DNA until it finds its consensus sequence, where it cleaves and resolves the cruciform DNA. The sequence is that of Crossover junction endodeoxyribonuclease RuvC from Nocardia farcinica (strain IFM 10152).